A 56-amino-acid polypeptide reads, in one-letter code: Large ribosomal subunit protein bL33 (56 aa).

This sequence belongs to the bacterial ribosomal protein bL33 family.

This chain is Large ribosomal subunit protein bL33, found in Vibrio vulnificus (strain YJ016).